We begin with the raw amino-acid sequence, 605 residues long: Protein Spindly (605 aa).

Residue Met-1 is modified to N-acetylmethionine. The stretch at 2–442 (EADIITNLRC…ELKLKYEPEE (441 aa)) forms a coiled coil. A phosphoserine mark is found at Ser-513, Ser-515, and Ser-555. A disordered region spans residues 544–580 (ALSERSGNTPNSPRLAAESKLQTEVKEGKETSSKLEK). The span at 564 to 580 (LQTEVKEGKETSSKLEK) shows a compositional bias: basic and acidic residues.

Belongs to the Spindly family. In terms of assembly, interacts with KNTC1 and ZW10. These interactions appear weak and may be transient or indirect. Interacts with dynein intermediate chain and dynactin (DCTN1). Interacts with the catalytically active form of USP45. Post-translationally, monoubiquitinated with'Lys-48' linkage. Deubiquitinated by USP45.

Its subcellular location is the cytoplasm. It localises to the cytoskeleton. It is found in the microtubule organizing center. The protein resides in the centrosome. The protein localises to the chromosome. Its subcellular location is the centromere. It localises to the kinetochore. It is found in the nucleus. The protein resides in the spindle pole. In terms of biological role, required for the localization of dynein and dynactin to the mitotic kintochore. Dynein is believed to control the initial lateral interaction between the kinetochore and spindle microtubules and to facilitate the subsequent formation of end-on kinetochore-microtubule attachments mediated by the NDC80 complex. Also required for correct spindle orientation. Does not appear to be required for the removal of spindle assembly checkpoint (SAC) proteins from the kinetochore upon bipolar spindle attachment. Acts as an adapter protein linking the dynein motor complex to various cargos and converts dynein from a non-processive to a highly processive motor in the presence of dynactin. Facilitates the interaction between dynein and dynactin and activates dynein processivity (the ability to move along a microtubule for a long distance without falling off the track). Plays a role in cell migration. This Homo sapiens (Human) protein is Protein Spindly.